We begin with the raw amino-acid sequence, 506 residues long: Exoglucanase (506 aa).

Positions 1-18 (MFPRSILLALSLTAVALG) are cleaved as a signal peptide. Positions 19-450 (QQVGTNMAEN…IKFGDINSTF (432 aa)) are catalytic. Glu-227 acts as the Nucleophile in catalysis. Residue Glu-232 is the Proton donor of the active site. Asn-308 carries an N-linked (GlcNAc...) asparagine glycan. The interval 405–426 (ASPSQPGISRGTCSRDSGKPED) is disordered. Positions 406 to 419 (SPSQPGISRGTCSR) are enriched in polar residues. N-linked (GlcNAc...) asparagine glycosylation occurs at Asn-447. Positions 449-472 (TFNNNGGGGGNPSPTTTRPNSPAQ) are disordered. The linker stretch occupies residues 451–473 (NNNGGGGGNPSPTTTRPNSPAQT). A compositionally biased stretch (low complexity) spans 460-470 (PSPTTTRPNSP). Residues 470-506 (PAQTMWGQCGGQGWTGPTACQSPSTCHVINDFYSQCF) enclose the CBM1 domain. 2 cysteine pairs are disulfide-bonded: Cys-478/Cys-495 and Cys-489/Cys-505.

This sequence belongs to the glycosyl hydrolase 7 (cellulase C) family.

It catalyses the reaction Hydrolysis of (1-&gt;4)-beta-D-glucosidic linkages in cellulose and cellotetraose, releasing cellobiose from the non-reducing ends of the chains.. In terms of biological role, the biological conversion of cellulose to glucose generally requires three types of hydrolytic enzymes: (1) Endoglucanases which cut internal beta-1,4-glucosidic bonds; (2) Exocellobiohydrolases that cut the disaccharide cellobiose from the non-reducing end of the cellulose polymer chain; (3) Beta-1,4-glucosidases which hydrolyze the cellobiose and other short cello-oligosaccharides to glucose. The sequence is that of Exoglucanase (cel2) from Agaricus bisporus (White button mushroom).